Here is a 325-residue protein sequence, read N- to C-terminus: Dimethylallyltranstransferase (325 aa).

Positions 54 and 84 each coordinate isopentenyl diphosphate. Aspartate 91 and aspartate 95 together coordinate Mg(2+). The short motif at 91–95 (DRVVD) is the DDXXD motif element. Position 101 (arginine 101) interacts with isopentenyl diphosphate. Positions 217-221 (RDIIA) match the DDXXD motif motif.

This sequence belongs to the FPP/GGPP synthase family. Requires Mg(2+) as cofactor.

The enzyme catalyses isopentenyl diphosphate + dimethylallyl diphosphate = (2E)-geranyl diphosphate + diphosphate. Its pathway is isoprenoid biosynthesis; geranyl diphosphate biosynthesis; geranyl diphosphate from dimethylallyl diphosphate and isopentenyl diphosphate: step 1/1. Functionally, catalyzes the addition of isopentenyl diphosphate (IPP) onto dimethylallyl diphosphate (DMAPP) to form geranyl pyrophosphate (GPP). Is probably involved in the biosynthesis of decaprenyl diphosphate, which is required for mycobacterial cell wall synthesis. Could be required for host endothelial-cell invasion and/or intracellular survival. This Mycobacterium tuberculosis (strain ATCC 25618 / H37Rv) protein is Dimethylallyltranstransferase.